A 134-amino-acid polypeptide reads, in one-letter code: Large ribosomal subunit protein bL21 (134 aa).

Belongs to the bacterial ribosomal protein bL21 family. As to quaternary structure, part of the 50S ribosomal subunit. Contacts protein L20.

Functionally, this protein binds to 23S rRNA in the presence of protein L20. This is Large ribosomal subunit protein bL21 from Pelagibacter ubique (strain HTCC1062).